A 127-amino-acid polypeptide reads, in one-letter code: Large ribosomal subunit protein eL32 (127 aa).

Residues lysine 37 to methionine 48 show a composition bias toward basic and acidic residues. Positions lysine 37 to serine 65 are disordered.

This sequence belongs to the eukaryotic ribosomal protein eL32 family.

This Thermococcus sibiricus (strain DSM 12597 / MM 739) protein is Large ribosomal subunit protein eL32.